Here is a 736-residue protein sequence, read N- to C-terminus: Centrosomal protein kizuna (736 aa).

Residues 10-35 (HRAMKLQRNLRHCEGKRLELERELFQ) are a coiled coil. A compositionally biased stretch (polar residues) spans 192–208 (NTSFQLSQKMPVTSVAS). Disordered regions lie at residues 192 to 238 (NTSF…SAQL), 279 to 305 (SFTHANPSGASPDACDYINNQTSDKHS), 323 to 348 (EDKQCLDSSSDLTVSISESEDDSYPP), and 642 to 690 (TVEE…NMST). The span at 210–219 (EDGRTHRAQI) shows a compositional bias: basic and acidic residues. Positions 328–339 (LDSSSDLTVSIS) are enriched in polar residues. Positions 658–668 (SETSFSSSEKS) are enriched in low complexity. Positions 678–690 (IQPNYMKSNNMST) are enriched in polar residues.

The protein belongs to the kizuna family.

The protein resides in the cytoplasm. It is found in the cytoskeleton. Its subcellular location is the microtubule organizing center. It localises to the centrosome. The protein localises to the cilium basal body. Functionally, centrosomal protein required for establishing a robust mitotic centrosome architecture that can endure the forces that converge on the centrosomes during spindle formation. Required for stabilizing the expanded pericentriolar material around the centriole. This chain is Centrosomal protein kizuna (kiz), found in Xenopus laevis (African clawed frog).